Consider the following 507-residue polypeptide: Ribose import ATP-binding protein RbsA 2 (507 aa).

2 consecutive ABC transporter domains span residues 7 to 245 (FSLD…VGRN) and 249 to 498 (LFTR…MPQS). 39 to 46 (GENGAGKS) serves as a coordination point for ATP.

This sequence belongs to the ABC transporter superfamily. Ribose importer (TC 3.A.1.2.1) family. As to quaternary structure, the complex is composed of an ATP-binding protein (RbsA), two transmembrane proteins (RbsC) and a solute-binding protein (RbsB).

It is found in the cell inner membrane. It catalyses the reaction D-ribose(out) + ATP + H2O = D-ribose(in) + ADP + phosphate + H(+). Part of the ABC transporter complex RbsABC involved in ribose import. Responsible for energy coupling to the transport system. This chain is Ribose import ATP-binding protein RbsA 2, found in Mesorhizobium japonicum (strain LMG 29417 / CECT 9101 / MAFF 303099) (Mesorhizobium loti (strain MAFF 303099)).